Here is a 494-residue protein sequence, read N- to C-terminus: MNGITAWMEKYLVPVAAKIGSQKHLVALRDSFIGMLPATLAGALAAMISAIVTTFPSAIQQMMLGATAFSKLAPEKVWTLANTPIIGDLNNISALVNQGTLTVIGLIFAFSWGYNLARAYGVNDLAGGIVSLATLFAGLPNQMGKFTAALGTGKAGVAATDKLNGVLGDQGLAAWKPLFASAHLDAGAYFTVIIMGALAVIIYAKLMLADITIKMPESVPPAVAKAFLAIIPTIAALYIVGLIYYIIGKLTNDSVINLITHYIAEPFQILSQNIFSVLIVTLFVSVFWFFGLHGPNVLAPVLDGIWGPLGLNNQALYFQVHSQGIRDLIAKGAVDKAHAINGDYVNLWVRGSWDAFAWFGGSGGTITLVIAIILFSKRKDYKIVGRLGLAPGIFNINEPVLFGLPVVLNAIFFIPFAVAPLISVIIAYTATALHLVDPVVNAVPWVTPPIMNAFMATGFDWRAIVLTIINLIITFVIWVPFVIAANKLEETELD.

Residues 8 to 481 (MEKYLVPVAA…IITFVIWVPF (474 aa)) form the PTS EIIC type-3 domain. Transmembrane regions (helical) follow at residues 32 to 52 (FIGMLPATLAGALAAMISAIV), 92 to 112 (ISALVNQGTLTVIGLIFAFSW), 119 to 139 (AYGVNDLAGGIVSLATLFAGL), 188 to 208 (AYFTVIIMGALAVIIYAKLML), 227 to 247 (FLAIIPTIAALYIVGLIYYII), 274 to 294 (IFSVLIVTLFVSVFWFFGLHG), 355 to 375 (AFAWFGGSGGTITLVIAIILF), 406 to 426 (VVLNAIFFIPFAVAPLISVII), and 463 to 483 (AIVLTIINLIITFVIWVPFVI).

The protein localises to the cell membrane. Its function is as follows. The phosphoenolpyruvate-dependent sugar phosphotransferase system (PTS), a major carbohydrate active transport system, catalyzes the phosphorylation of incoming sugar substrates concomitant with their translocation across the cell membrane. Involved in cellobiose transport with PtcA and PtcB. This system can also transport lactose. This Lactococcus lactis subsp. lactis (strain IL1403) (Streptococcus lactis) protein is PTS system cellobiose-specific EIIC component.